A 393-amino-acid polypeptide reads, in one-letter code: Short-chain dehydrogenase/reductase family 42E member 1 (393 aa).

The Proton acceptor role is filled by Tyr152. Lys156 contacts NAD(+). Helical transmembrane passes span Leu282–Gly302 and Gly371–Leu391.

Belongs to the 3-beta-HSD family.

Its subcellular location is the membrane. This is Short-chain dehydrogenase/reductase family 42E member 1 (SDR42E1) from Macaca fascicularis (Crab-eating macaque).